Consider the following 226-residue polypeptide: Ribonuclease 3 (226 aa).

Positions 4 to 127 (LEEFEKKLGY…VMGAIYLEKG (124 aa)) constitute an RNase III domain. E40 lines the Mg(2+) pocket. The active site involves D44. Residues N113 and E116 each contribute to the Mg(2+) site. E116 is a catalytic residue. The DRBM domain occupies 154–223 (DFKTALQEFT…AKEALKILKA (70 aa)).

This sequence belongs to the ribonuclease III family. Homodimer. Mg(2+) serves as cofactor.

The protein resides in the cytoplasm. The catalysed reaction is Endonucleolytic cleavage to 5'-phosphomonoester.. In terms of biological role, digests double-stranded RNA. Involved in the processing of primary rRNA transcript to yield the immediate precursors to the large and small rRNAs (23S and 16S). Processes some mRNAs, and tRNAs when they are encoded in the rRNA operon. Processes pre-crRNA and tracrRNA of type II CRISPR loci if present in the organism. The polypeptide is Ribonuclease 3 (Nitratiruptor sp. (strain SB155-2)).